The chain runs to 319 residues: Acetyl-coenzyme A carboxylase carboxyl transferase subunit beta (319 aa).

Residues L24–A293 enclose the CoA carboxyltransferase N-terminal domain. The disordered stretch occupies residues P282–A319.

This sequence belongs to the AccD/PCCB family. Acetyl-CoA carboxylase is a heterohexamer composed of biotin carboxyl carrier protein (AccB), biotin carboxylase (AccC) and two subunits each of ACCase subunit alpha (AccA) and ACCase subunit beta (AccD).

It localises to the cytoplasm. The enzyme catalyses N(6)-carboxybiotinyl-L-lysyl-[protein] + acetyl-CoA = N(6)-biotinyl-L-lysyl-[protein] + malonyl-CoA. It participates in lipid metabolism; malonyl-CoA biosynthesis; malonyl-CoA from acetyl-CoA: step 1/1. Functionally, component of the acetyl coenzyme A carboxylase (ACC) complex. Biotin carboxylase (BC) catalyzes the carboxylation of biotin on its carrier protein (BCCP) and then the CO(2) group is transferred by the transcarboxylase to acetyl-CoA to form malonyl-CoA. The polypeptide is Acetyl-coenzyme A carboxylase carboxyl transferase subunit beta (Nitrobacter winogradskyi (strain ATCC 25391 / DSM 10237 / CIP 104748 / NCIMB 11846 / Nb-255)).